We begin with the raw amino-acid sequence, 337 residues long: DNA-directed RNA polymerase subunit alpha (337 aa).

The alpha N-terminal domain (alpha-NTD) stretch occupies residues 1–233 (MVREDVVGST…DLLIPFLHAE (233 aa)). The tract at residues 265 to 337 (KGIPLTCIFI…FAINLLNKKL (73 aa)) is alpha C-terminal domain (alpha-CTD).

Belongs to the RNA polymerase alpha chain family. In plastids the minimal PEP RNA polymerase catalytic core is composed of four subunits: alpha, beta, beta', and beta''. When a (nuclear-encoded) sigma factor is associated with the core the holoenzyme is formed, which can initiate transcription.

Its subcellular location is the plastid. The protein resides in the chloroplast. The catalysed reaction is RNA(n) + a ribonucleoside 5'-triphosphate = RNA(n+1) + diphosphate. Functionally, DNA-dependent RNA polymerase catalyzes the transcription of DNA into RNA using the four ribonucleoside triphosphates as substrates. This is DNA-directed RNA polymerase subunit alpha from Phalaenopsis aphrodite subsp. formosana (Moth orchid).